A 1167-amino-acid chain; its full sequence is Pesticidal crystal protein Cry21Aa (1167 aa).

This sequence belongs to the delta endotoxin family.

Endotoxin with nematicidal activity. The protein is Pesticidal crystal protein Cry21Aa (cry21Aa) of Bacillus thuringiensis.